Reading from the N-terminus, the 925-residue chain is Proto-oncogene DBL (925 aa).

A CRAL-TRIO domain is found at 1-88 (MAEANPRRGK…ELGGTLQYCH (88 aa)). The stretch at 221–322 (WKFEQDFQQL…EIKAKRIQLS (102 aa)) is one Spectrin repeat. Positions 495–675 (LKNHVLNELI…LDLLKSVNDS (181 aa)) constitute a DH domain. The 123-residue stretch at 687 to 809 (NLNELGKMIM…WLKEIRNILL (123 aa)) folds into the PH domain.

Belongs to the MCF2 family. Interacts with an array of inositol phospholipids such as phosphatidylinositol 3-phosphate (PI3P), phosphatidylinositol 4-phosphate (PI4P) and phosphatidylinositol 5-phosphate (PI5P). May interact with CCPG1. In terms of processing, phosphorylation by TNK2 enhances guanine nucleotide exchange factor (GEF) activity toward Rho family proteins. In terms of tissue distribution, isoform 1 is expressed only in brain. Isoform 3 is expressed in heart, kidney, spleen, liver and testis. Isoform 4 is expressed in brain, heart, kidney, testis, placenta, stomach and peripheral blood. The protein is detectable in brain, heart, kidney, intestine, muscle, lung and testis.

It is found in the cytoplasm. It localises to the membrane. In terms of biological role, guanine nucleotide exchange factor (GEF) that modulates the Rho family of GTPases. Promotes the conversion of some member of the Rho family GTPase from the GDP-bound to the GTP-bound form. Isoform 1 exhibits no activity toward RHOA, RAC1 or CDC42. Isoform 2 exhibits decreased GEF activity toward CDC42. Isoform 3 exhibits a weak but significant activity toward RAC1 and CDC42. Isoform 4 exhibits significant activity toward RHOA and CDC42. The truncated DBL oncogene is active toward RHOA, RAC1 and CDC42. In Homo sapiens (Human), this protein is Proto-oncogene DBL (MCF2).